We begin with the raw amino-acid sequence, 360 residues long: Peptide chain release factor 1 (360 aa).

Gln235 carries the N5-methylglutamine modification. Over residues 285-295 (RQAAEQTDMRR) the composition is skewed to basic and acidic residues. Positions 285–309 (RQAAEQTDMRRNLLGSGDRSDKIRT) are disordered.

It belongs to the prokaryotic/mitochondrial release factor family. In terms of processing, methylated by PrmC. Methylation increases the termination efficiency of RF1.

Its subcellular location is the cytoplasm. Its function is as follows. Peptide chain release factor 1 directs the termination of translation in response to the peptide chain termination codons UAG and UAA. The polypeptide is Peptide chain release factor 1 (prfA) (Haemophilus influenzae (strain ATCC 51907 / DSM 11121 / KW20 / Rd)).